A 157-amino-acid polypeptide reads, in one-letter code: Endoribonuclease YbeY (157 aa).

Positions 114, 118, and 124 each coordinate Zn(2+).

This sequence belongs to the endoribonuclease YbeY family. Requires Zn(2+) as cofactor.

It localises to the cytoplasm. Its function is as follows. Single strand-specific metallo-endoribonuclease involved in late-stage 70S ribosome quality control and in maturation of the 3' terminus of the 16S rRNA. This is Endoribonuclease YbeY from Serratia proteamaculans (strain 568).